The primary structure comprises 171 residues: Co-chaperone protein HscB (171 aa).

One can recognise a J domain in the interval 2 to 74 (DYFTLFGLPA…LTRAEYLLSL (73 aa)).

This sequence belongs to the HscB family. Interacts with HscA and stimulates its ATPase activity. Interacts with IscU.

Its function is as follows. Co-chaperone involved in the maturation of iron-sulfur cluster-containing proteins. Seems to help targeting proteins to be folded toward HscA. The protein is Co-chaperone protein HscB of Salmonella arizonae (strain ATCC BAA-731 / CDC346-86 / RSK2980).